We begin with the raw amino-acid sequence, 110 residues long: Nucleoid-associated protein Mvan_5528 (110 aa).

It belongs to the YbaB/EbfC family. As to quaternary structure, homodimer.

The protein resides in the cytoplasm. It localises to the nucleoid. Binds to DNA and alters its conformation. May be involved in regulation of gene expression, nucleoid organization and DNA protection. The polypeptide is Nucleoid-associated protein Mvan_5528 (Mycolicibacterium vanbaalenii (strain DSM 7251 / JCM 13017 / BCRC 16820 / KCTC 9966 / NRRL B-24157 / PYR-1) (Mycobacterium vanbaalenii)).